Consider the following 189-residue polypeptide: GTP cyclohydrolase 1 (189 aa).

3 residues coordinate Zn(2+): Cys-78, His-81, and Cys-150.

Belongs to the GTP cyclohydrolase I family. In terms of assembly, homomer.

The enzyme catalyses GTP + H2O = 7,8-dihydroneopterin 3'-triphosphate + formate + H(+). Its pathway is cofactor biosynthesis; 7,8-dihydroneopterin triphosphate biosynthesis; 7,8-dihydroneopterin triphosphate from GTP: step 1/1. The chain is GTP cyclohydrolase 1 from Bacillus cytotoxicus (strain DSM 22905 / CIP 110041 / 391-98 / NVH 391-98).